Reading from the N-terminus, the 276-residue chain is 3-methyl-2-oxobutanoate hydroxymethyltransferase (276 aa).

2 residues coordinate Mg(2+): Asp44 and Asp83. 3-methyl-2-oxobutanoate contacts are provided by residues 44-45, Asp83, and Lys113; that span reads DS. Glu115 provides a ligand contact to Mg(2+). The active-site Proton acceptor is Glu182.

The protein belongs to the PanB family. Homodecamer; pentamer of dimers. Mg(2+) serves as cofactor.

The protein localises to the cytoplasm. It catalyses the reaction 3-methyl-2-oxobutanoate + (6R)-5,10-methylene-5,6,7,8-tetrahydrofolate + H2O = 2-dehydropantoate + (6S)-5,6,7,8-tetrahydrofolate. It functions in the pathway cofactor biosynthesis; (R)-pantothenate biosynthesis; (R)-pantoate from 3-methyl-2-oxobutanoate: step 1/2. Functionally, catalyzes the reversible reaction in which hydroxymethyl group from 5,10-methylenetetrahydrofolate is transferred onto alpha-ketoisovalerate to form ketopantoate. The protein is 3-methyl-2-oxobutanoate hydroxymethyltransferase of Clostridium acetobutylicum (strain ATCC 824 / DSM 792 / JCM 1419 / IAM 19013 / LMG 5710 / NBRC 13948 / NRRL B-527 / VKM B-1787 / 2291 / W).